The primary structure comprises 746 residues: Exostosin-1 (746 aa).

At 1–7 (MQAKKRY) the chain is on the cytoplasmic side. A helical; Signal-anchor for type II membrane protein transmembrane segment spans residues 8–28 (FILLSAGSCLALLFYFGGLQF). Residues 29–746 (RASRSHSRRE…RKKYRDIERL (718 aa)) lie on the Lumenal side of the membrane. Asn89 carries an N-linked (GlcNAc...) asparagine glycan. 2 cysteine pairs are disulfide-bonded: Cys98–Cys103 and Cys109–Cys152. A protein is bound by residues Leu166 and Tyr203. The UDP site is built by Lys267, Lys269, Tyr271, and Arg280. A disulfide bridge connects residues Cys298 and Cys312. His300 serves as a coordination point for a protein. UDP contacts are provided by Tyr319 and Tyr324. Asn330 carries an N-linked (GlcNAc...) asparagine glycan. Cystine bridges form between Cys334–Cys355 and Cys652–Cys704. Positions 346 and 349 each coordinate UDP.

It belongs to the glycosyltransferase 47 family. As to quaternary structure, part of the heparan sulfate polymerase, a dimeric complex composed of EXT1 and EXT2. Could also form homooligomeric complexes. Interacts with NDST1. Post-translationally, N-glycosylated.

It is found in the golgi apparatus membrane. The protein localises to the golgi apparatus. The protein resides in the cis-Golgi network membrane. It localises to the endoplasmic reticulum membrane. The catalysed reaction is 3-O-{alpha-D-GlcNAc-[(1-&gt;4)-beta-D-GlcA-(1-&gt;4)-alpha-D-GlcNAc](n)-(1-&gt;4)-beta-D-GlcA-(1-&gt;3)-beta-D-Gal-(1-&gt;3)-beta-D-Gal-(1-&gt;4)-beta-D-Xyl}-L-seryl-[protein] + UDP-alpha-D-glucuronate = 3-O-{[(1-&gt;4)-beta-D-GlcA-(1-&gt;4)-alpha-D-GlcNAc](n+1)-(1-&gt;4)-beta-D-GlcA-(1-&gt;3)-beta-D-Gal-(1-&gt;3)-beta-D-Gal-(1-&gt;4)-beta-D-Xyl}-L-seryl-[protein] + UDP + H(+). Its pathway is protein modification; protein glycosylation. In terms of biological role, glycosyltransferase forming with EXT2 the heterodimeric heparan sulfate polymerase which catalyzes the elongation of the heparan sulfate glycan backbone. Glycan backbone extension consists in the alternating transfer of (1-&gt;4)-beta-D-GlcA and (1-&gt;4)-alpha-D-GlcNAc residues from their respective UDP-sugar donors. Both EXT1 and EXT2 are required for the full activity of the polymerase since EXT1 bears the N-acetylglucosaminyl-proteoglycan 4-beta-glucuronosyltransferase activity within the complex while EXT2 carries the glucuronosyl-N-acetylglucosaminyl-proteoglycan 4-alpha-N-acetylglucosaminyltransferase activity. Heparan sulfate proteoglycans are ubiquitous components of the extracellular matrix and play an important role in tissue homeostasis and signaling. The protein is Exostosin-1 (EXT1) of Bos taurus (Bovine).